The primary structure comprises 385 residues: Probable nitrate transporter NarT (385 aa).

12 helical membrane-spanning segments follow: residues threonine 14–isoleucine 34, isoleucine 47–threonine 67, isoleucine 69–phenylalanine 89, glycine 97–valine 117, glycine 139–tryptophan 159, threonine 161–glycine 181, leucine 205–phenylalanine 225, glycine 246–phenylalanine 266, isoleucine 277–isoleucine 297, isoleucine 302–alanine 322, glycine 330–valine 350, and leucine 359–tyrosine 379.

Belongs to the major facilitator superfamily. Nitrate/nitrite porter (TC 2.A.1.8) family.

The protein localises to the cell membrane. In terms of biological role, probably required for nitrate uptake under anoxic conditions. Also possibly involved in excretion of nitrite produced by the dissimilatory reduction of nitrate. The polypeptide is Probable nitrate transporter NarT (narT) (Staphylococcus haemolyticus (strain JCSC1435)).